The sequence spans 204 residues: Guanylate kinase (204 aa).

The Guanylate kinase-like domain occupies 18-196 (PKLFTISAPA…SYEILKSIFI (179 aa)). 25–32 (APAGAGKT) serves as a coordination point for ATP.

Belongs to the guanylate kinase family.

It is found in the cytoplasm. The catalysed reaction is GMP + ATP = GDP + ADP. Functionally, essential for recycling GMP and indirectly, cGMP. This Chlamydia felis (strain Fe/C-56) (Chlamydophila felis) protein is Guanylate kinase.